Reading from the N-terminus, the 200-residue chain is Inner membrane-spanning protein YciB (200 aa).

A run of 6 helical transmembrane segments spans residues 7-27 (HPLF…VVNA), 32-52 (FAAT…SYVV), 56-76 (VPLM…LTLV), 93-113 (LFAA…AIMF), 126-146 (ILTF…EIIW), and 153-173 (FWVG…AIAQ).

It belongs to the YciB family.

Its subcellular location is the cell inner membrane. In terms of biological role, plays a role in cell envelope biogenesis, maintenance of cell envelope integrity and membrane homeostasis. The sequence is that of Inner membrane-spanning protein YciB from Bradyrhizobium sp. (strain BTAi1 / ATCC BAA-1182).